Consider the following 361-residue polypeptide: UDP-N-acetylglucosamine--N-acetylmuramyl-(pentapeptide) pyrophosphoryl-undecaprenol N-acetylglucosamine transferase (361 aa).

UDP-N-acetyl-alpha-D-glucosamine is bound by residues 12-14 (TGG), asparagine 126, arginine 167, serine 192, isoleucine 247, and glutamine 292.

The protein belongs to the glycosyltransferase 28 family. MurG subfamily.

Its subcellular location is the cell inner membrane. The enzyme catalyses di-trans,octa-cis-undecaprenyl diphospho-N-acetyl-alpha-D-muramoyl-L-alanyl-D-glutamyl-meso-2,6-diaminopimeloyl-D-alanyl-D-alanine + UDP-N-acetyl-alpha-D-glucosamine = di-trans,octa-cis-undecaprenyl diphospho-[N-acetyl-alpha-D-glucosaminyl-(1-&gt;4)]-N-acetyl-alpha-D-muramoyl-L-alanyl-D-glutamyl-meso-2,6-diaminopimeloyl-D-alanyl-D-alanine + UDP + H(+). It participates in cell wall biogenesis; peptidoglycan biosynthesis. Functionally, cell wall formation. Catalyzes the transfer of a GlcNAc subunit on undecaprenyl-pyrophosphoryl-MurNAc-pentapeptide (lipid intermediate I) to form undecaprenyl-pyrophosphoryl-MurNAc-(pentapeptide)GlcNAc (lipid intermediate II). The sequence is that of UDP-N-acetylglucosamine--N-acetylmuramyl-(pentapeptide) pyrophosphoryl-undecaprenol N-acetylglucosamine transferase from Syntrophus aciditrophicus (strain SB).